Reading from the N-terminus, the 726-residue chain is Dipeptidyl-peptidase 5 (726 aa).

The signal sequence occupies residues 1-19 (MAAAKWLIASLAFASSGLA). N-linked (GlcNAc...) asparagine glycosylation is found at Asn96 and Asn252. Residues 269–291 (AEPINKRNGPRTPQGIEGASSSP) are disordered. The active-site Charge relay system is Ser558. N-linked (GlcNAc...) asparagine glycosylation is present at Asn605. Residues Asp641 and His673 each act as charge relay system in the active site. Asn699 carries an N-linked (GlcNAc...) asparagine glycan.

Belongs to the peptidase S9C family.

It is found in the secreted. This is Dipeptidyl-peptidase 5 (DPPV) from Arthroderma benhamiae (Trichophyton mentagrophytes).